The primary structure comprises 1202 residues: Nucleolar protein 6 (1202 aa).

The tract at residues 1–64 is disordered; that stretch reads MNKTKRKQQS…KKYKDNETNK (64 aa).

It belongs to the NRAP family. As to quaternary structure, part of the small subunit (SSU) processome, composed of more than 70 proteins and the RNA chaperone small nucleolar RNA (snoRNA) U3.

It is found in the nucleus. Its subcellular location is the nucleolus. It localises to the chromosome. Part of the small subunit (SSU) processome, first precursor of the small eukaryotic ribosomal subunit. During the assembly of the SSU processome in the nucleolus, many ribosome biogenesis factors, an RNA chaperone and ribosomal proteins associate with the nascent pre-rRNA and work in concert to generate RNA folding, modifications, rearrangements and cleavage as well as targeted degradation of pre-ribosomal RNA by the RNA exosome. This is Nucleolar protein 6 from Drosophila willistoni (Fruit fly).